The chain runs to 293 residues: Thiamine-monophosphate kinase (293 aa).

Residues E25, V39, D40, D68, and D113 each contribute to the Mg(2+) site. ATP is bound by residues 112–113 and R136; that span reads GD. D194 contributes to the Mg(2+) binding site. ATP is bound at residue S196. Position 197 (D197) interacts with Mg(2+). Substrate-binding residues include E243 and W286.

It belongs to the thiamine-monophosphate kinase family. In terms of assembly, homodimer.

The catalysed reaction is thiamine phosphate + ATP = thiamine diphosphate + ADP. Its pathway is cofactor biosynthesis; thiamine diphosphate biosynthesis; thiamine diphosphate from thiamine phosphate: step 1/1. With respect to regulation, is inhibited by AMP; the mode of AMP inhibition is uncompetitive for both TMP and ATP. Its function is as follows. Catalyzes the ATP-dependent phosphorylation of thiamine-monophosphate (TMP) to form thiamine-pyrophosphate (TPP), the active form of vitamin B1. In Pyrobaculum calidifontis (strain DSM 21063 / JCM 11548 / VA1), this protein is Thiamine-monophosphate kinase.